A 127-amino-acid polypeptide reads, in one-letter code: Fluoride-specific ion channel FluC (127 aa).

4 consecutive transmembrane segments (helical) span residues 4 to 24 (TLLA…QLGV), 35 to 55 (LGTL…LAFF), 71 to 91 (TGLC…IMFL), and 103 to 123 (VLLN…LVTW). Na(+) is bound by residues Gly-75 and Thr-78.

It belongs to the fluoride channel Fluc/FEX (TC 1.A.43) family.

The protein localises to the cell inner membrane. The enzyme catalyses fluoride(in) = fluoride(out). Na(+) is not transported, but it plays an essential structural role and its presence is essential for fluoride channel function. In terms of biological role, fluoride-specific ion channel. Important for reducing fluoride concentration in the cell, thus reducing its toxicity. This Pectobacterium carotovorum subsp. carotovorum (strain PC1) protein is Fluoride-specific ion channel FluC.